The chain runs to 393 residues: uncharacterized protein (393 aa).

The B box-type zinc finger occupies 6–47 (KYDNKCAIHKEHKIKMICATCKDVVCNECILLDHNGHKFGRI). The Zn(2+) site is built by Cys-11, His-14, Cys-34, and His-39.

This is an uncharacterized protein from Dictyostelium discoideum (Social amoeba).